A 473-amino-acid chain; its full sequence is MKKGRVSQVLGPVVDVRFEDGHLPEIYNAIKISQPAASENEVGIDLTLEVALHLGDDTVRTIAMASTDGVQRGMEAVDTGAPISVPVGDVTLGRVFNVLGENIDLNEPVPADAKKDPIHRQAPSFDQLSTEVEILETGIKVVDLLAPYIKGGKIGLFGGAGVGKTVLIQELINNIAQEHGGISVFAGVGERTREGNDLFYEMSDSGVINKTAMVFGQMNEPPGARMRVALTGLTMAEHFRDVQGQDVLFFIDNIFRFTQAGSEVSALLGRMPSAVGYQPTLATEMGQLQERITSTNVGSVTSIQAIYVPADDYTDPAPATTFAHLDATTNLERKLTEMGIYPAVDPLASTSRALAPEIVGEEHYAVAREVQSTLQRYKELQDIIAILGMDELGEEDKLVVHRARRIQFFLSQNFHVAEQFTGQKGSYVPVKETVQGFKEILAGKYDHLPEDAFRLVGRIEEVVEKAKEMGVEV.

ATP is bound at residue 158-165; that stretch reads GGAGVGKT.

This sequence belongs to the ATPase alpha/beta chains family. In terms of assembly, F-type ATPases have 2 components, CF(1) - the catalytic core - and CF(0) - the membrane proton channel. CF(1) has five subunits: alpha(3), beta(3), gamma(1), delta(1), epsilon(1). CF(0) has three main subunits: a(1), b(2) and c(9-12). The alpha and beta chains form an alternating ring which encloses part of the gamma chain. CF(1) is attached to CF(0) by a central stalk formed by the gamma and epsilon chains, while a peripheral stalk is formed by the delta and b chains. The F(1)F(0) complex interacts with SpoIIIJ and YqjG; YqgA is found in the same complex.

It is found in the cell membrane. The protein resides in the membrane raft. It catalyses the reaction ATP + H2O + 4 H(+)(in) = ADP + phosphate + 5 H(+)(out). Produces ATP from ADP in the presence of a proton gradient across the membrane. The catalytic sites are hosted primarily by the beta subunits. The sequence is that of ATP synthase subunit beta from Bacillus subtilis (strain 168).